A 31-amino-acid chain; its full sequence is Maltose/maltodextrin import ATP-binding protein MalK (31 aa).

It belongs to the ABC transporter superfamily. Maltooligosaccharide importer (TC 3.A.1.1.1) family. As to quaternary structure, the complex is composed of two ATP-binding proteins (MalK), two transmembrane proteins (MalG and MalK) and a solute-binding protein (MalE).

It is found in the cell inner membrane. The enzyme catalyses D-maltose(out) + ATP + H2O = D-maltose(in) + ADP + phosphate + H(+). In terms of biological role, part of the ABC transporter complex MalEFGK involved in maltose/maltodextrin import. Responsible for energy coupling to the transport system. The chain is Maltose/maltodextrin import ATP-binding protein MalK from Photorhabdus luminescens (Xenorhabdus luminescens).